The chain runs to 1128 residues: Adipocyte enhancer-binding protein 1 (1128 aa).

The N-terminal stretch at 1–25 (MAAVRTASLLCGLLALLALCPEGSP) is a signal peptide. The interval 40–368 (GFLSEFETQS…PRKGEELEEE (329 aa)) is disordered. Residues 77–109 (PRADAEAPPEKNKDKEKKGKKDKGPKAAKHLEG) are compositionally biased toward basic and acidic residues. Positions 113–163 (PTKKPKEKPPKATKKPKEKPPKATKKPKEKPPKATKKPKEKPPKATKRPSA) are enriched in basic residues. 2 stretches are compositionally biased toward polar residues: residues 178 to 187 (RSLTSPSNPG) and 198 to 209 (TSLNTWQGQGEE). Positions 249-261 (RQKQPRPTPSRKR) are enriched in basic residues. 2 stretches are compositionally biased toward basic and acidic residues: residues 267 to 282 (PEEK…EVDP) and 327 to 363 (EELK…RKGE). Positions 375-532 (IKCPPIGMES…LCMRLEVLGC (158 aa)) constitute an F5/8 type C domain. Residues 382–547 (MESHRIEDNQ…YSYYAQNEVV (166 aa)) form a required for DNA-binding and interaction with NFKBIA region. Interaction with MAPK1 and MAPK3 stretches follow at residues 413–616 (AGAN…TAGM) and 998–1128 (DPSR…FGDF). The N-linked (GlcNAc...) asparagine glycan is linked to asparagine 520. The interaction with PTEN stretch occupies residues 547-977 (VTTDSLDFRH…TQCNFILARS (431 aa)). A Peptidase M14 domain is found at 555–896 (RHHSYKDMRQ…EALLTFMEQV (342 aa)). Residues 933–1128 (DYWRILNPGE…ETYTVNFGDF (196 aa)) are required for transcriptional repression. A disordered region spans residues 1027 to 1056 (LRRLNSTTGPATSPTPALTLPPSPTPGSTS). Residues 1030–1044 (LNSTTGPATSPTPAL) are compositionally biased toward low complexity.

The protein belongs to the peptidase M14 family. As to quaternary structure, interacts with different types of collagen, including collagens I, III, and V. Interacts with GNG5, NFKBIA, MAPK1, MAPK3 and PTEN. May interact with calmodulin. Interaction with MAPK1 may stimulate DNA-binding. Binds to DNA in vitro. In terms of processing, phosphorylated by MAPK1 in vitro. Expressed in aorta.

The protein resides in the secreted. Its function is as follows. As a positive regulator of collagen fibrillogenesis, it is probably involved in the organization and remodeling of the extracellular matrix. May positively regulate MAP-kinase activity in adipocytes, leading to enhanced adipocyte proliferation and reduced adipocyte differentiation. May also positively regulate NF-kappa-B activity in macrophages by promoting the phosphorylation and subsequent degradation of I-kappa-B-alpha (NFKBIA), leading to enhanced macrophage inflammatory responsiveness. Can act as a transcriptional repressor. This Rattus norvegicus (Rat) protein is Adipocyte enhancer-binding protein 1 (Aebp1).